The primary structure comprises 261 residues: Cytochrome c oxidase subunit 3 (261 aa).

Topologically, residues 1-15 (MAHQAHPYHMVDPSP) are mitochondrial matrix. The helical transmembrane segment at 16–34 (WPLTGATAALLMTSGLAIW) threads the bilayer. The Mitochondrial intermembrane portion of the chain corresponds to 35-40 (FHFHSL). Residues 41 to 66 (LLLYLGLTLLLLTMIQWWRDIIREGT) form a helical membrane-spanning segment. The Mitochondrial matrix segment spans residues 67–72 (FQGHHT). Residues 73 to 105 (PPVQKGLRYGMILFIVSEVFFFLGFFWAFYHSS) form a helical membrane-spanning segment. Topologically, residues 106 to 128 (LAPTPELGGCWPPTGINPLDPFE) are mitochondrial intermembrane. A helical transmembrane segment spans residues 129–152 (VPLLNTAVLLASGVTVTWAHHGLM). Residues 153-155 (EGN) lie on the Mitochondrial matrix side of the membrane. Residues 156-183 (RKEAIQALTLTIILGVYFTALQAMEYYE) form a helical membrane-spanning segment. Residues 184-190 (APFTIAD) are Mitochondrial intermembrane-facing. A helical membrane pass occupies residues 191 to 223 (GVYGTTFFVATGFHGLHVIIGSTFLAVCLLRQV). Over 224–232 (LYHFTSEHH) the chain is Mitochondrial matrix. Residues 233 to 256 (FGFEAAAWYWHFVDVVWLFLYVSI) traverse the membrane as a helical segment. Topologically, residues 257-261 (YWWGS) are mitochondrial intermembrane.

This sequence belongs to the cytochrome c oxidase subunit 3 family. Component of the cytochrome c oxidase (complex IV, CIV), a multisubunit enzyme composed of 14 subunits. The complex is composed of a catalytic core of 3 subunits MT-CO1, MT-CO2 and MT-CO3, encoded in the mitochondrial DNA, and 11 supernumerary subunits COX4I, COX5A, COX5B, COX6A, COX6B, COX6C, COX7A, COX7B, COX7C, COX8 and NDUFA4, which are encoded in the nuclear genome. The complex exists as a monomer or a dimer and forms supercomplexes (SCs) in the inner mitochondrial membrane with NADH-ubiquinone oxidoreductase (complex I, CI) and ubiquinol-cytochrome c oxidoreductase (cytochrome b-c1 complex, complex III, CIII), resulting in different assemblies (supercomplex SCI(1)III(2)IV(1) and megacomplex MCI(2)III(2)IV(2)).

The protein localises to the mitochondrion inner membrane. It catalyses the reaction 4 Fe(II)-[cytochrome c] + O2 + 8 H(+)(in) = 4 Fe(III)-[cytochrome c] + 2 H2O + 4 H(+)(out). Its function is as follows. Component of the cytochrome c oxidase, the last enzyme in the mitochondrial electron transport chain which drives oxidative phosphorylation. The respiratory chain contains 3 multisubunit complexes succinate dehydrogenase (complex II, CII), ubiquinol-cytochrome c oxidoreductase (cytochrome b-c1 complex, complex III, CIII) and cytochrome c oxidase (complex IV, CIV), that cooperate to transfer electrons derived from NADH and succinate to molecular oxygen, creating an electrochemical gradient over the inner membrane that drives transmembrane transport and the ATP synthase. Cytochrome c oxidase is the component of the respiratory chain that catalyzes the reduction of oxygen to water. Electrons originating from reduced cytochrome c in the intermembrane space (IMS) are transferred via the dinuclear copper A center (CU(A)) of subunit 2 and heme A of subunit 1 to the active site in subunit 1, a binuclear center (BNC) formed by heme A3 and copper B (CU(B)). The BNC reduces molecular oxygen to 2 water molecules using 4 electrons from cytochrome c in the IMS and 4 protons from the mitochondrial matrix. In Scyliorhinus canicula (Small-spotted catshark), this protein is Cytochrome c oxidase subunit 3 (MT-CO3).